Consider the following 1058-residue polypeptide: Ubiquitin-like modifier-activating enzyme 1 (1058 aa).

Residues 1-46 (MSSSPLSKKRRVSGPDPKPGSNCSPAQSALSEVSSVPTNGMAKNGS) form a disordered region. Position 2 is an N-acetylserine (S2). Residues S4, S13, S21, S24, and S46 each carry the phosphoserine modification. A compositionally biased stretch (polar residues) spans 21-38 (SNCSPAQSALSEVSSVPT). The residue at position 55 (Y55) is a Phosphotyrosine. 2 consecutive repeat copies span residues 63 to 199 (GHEA…GQLF) and 459 to 611 (GSDF…QVVI). A 2 approximate repeats region spans residues 63–611 (GHEAMKMLQT…GTKGNVQVVI (549 aa)). ATP is bound by residues A478, D504, R515, K528, and 576–577 (DN). Residue K528 is modified to N6-succinyllysine. The active-site Glycyl thioester intermediate is the C632. K671 is subject to N6-acetyllysine. T800 bears the Phosphothreonine mark. S810, S816, S820, and S835 each carry phosphoserine. Position 980 is an N6-acetyllysine (K980).

This sequence belongs to the ubiquitin-activating E1 family. As to quaternary structure, monomer. Interacts with GAN (via BTB domain). ISGylated. As to expression, ubiquitously expressed. In testis, expressed in A spermatogonia and spermatids but at very low levels in pachytene spermatocytes.

It is found in the cytoplasm. It localises to the mitochondrion. The protein localises to the nucleus. The enzyme catalyses ATP + ubiquitin + [E1 ubiquitin-activating enzyme]-L-cysteine = AMP + diphosphate + S-ubiquitinyl-[E1 ubiquitin-activating enzyme]-L-cysteine.. It participates in protein modification; protein ubiquitination. Catalyzes the first step in ubiquitin conjugation to mark cellular proteins for degradation through the ubiquitin-proteasome system. Activates ubiquitin by first adenylating its C-terminal glycine residue with ATP, and thereafter linking this residue to the side chain of a cysteine residue in E1, yielding a ubiquitin-E1 thioester and free AMP. Essential for the formation of radiation-induced foci, timely DNA repair and for response to replication stress. Promotes the recruitment of TP53BP1 and BRCA1 at DNA damage sites. This is Ubiquitin-like modifier-activating enzyme 1 (Uba1) from Mus musculus (Mouse).